A 1310-amino-acid chain; its full sequence is Major viral transcription factor ICP4 homolog (1310 aa).

Disordered stretches follow at residues 117–271, 285–454, and 636–696; these read AGAR…GPVE, GAKA…TPII, and GSSP…SLLD. Residues 341–350 are compositionally biased toward basic and acidic residues; sequence PVEKKPKSRE. Composition is skewed to low complexity over residues 351 to 364, 392 to 407, and 648 to 666; these read FVSS…WGSS, PSPS…DGGS, and PSPT…SAAA. Residues 677 to 685 carry the Nuclear localization signal motif; the sequence is RLRTPRKRK. Phosphoserine; by VZV ORF66 is present on residues Ser-686 and Ser-722. 2 disordered regions span residues 1195-1258 and 1282-1310; these read RFVF…SFGV and ELLS…QSRG. Residues 1217 to 1227 are compositionally biased toward basic and acidic residues; the sequence is RTADDREHALE. Over residues 1228-1250 the composition is skewed to acidic residues; that stretch reads PDDWEVGCEDAWDSEEGGGDDGD.

Belongs to the herpesviridae ICP4 family. Interacts with IE4 and IE63. Interacts with human USF1 and SP1. Phosphorylated by ORF66 protein kinase on Ser-686 and Ser-722. Also phosphorylated by ORF47 protein kinase and by human CSNK2A1/CKII.

The protein resides in the host nucleus. It is found in the host cytoplasm. The protein localises to the virion tegument. In terms of biological role, transcriptional transactivator. May interact with and recruit specific components of the general transcription machinery to viral promoters and stabilize their formation for transcription initiation. Negatively regulates its own transcription. This immediate early (EI) protein may be necessary in virion for viral pathogenesis. In Homo sapiens (Human), this protein is Major viral transcription factor ICP4 homolog.